Reading from the N-terminus, the 798-residue chain is Protocadherin beta-14 (798 aa).

Residues 1–26 (MEIRGALDLRKRQVLIFLVLLGLSRA) form the signal peptide. At 27–686 (GTESAHYSVA…APAQAQADSL (660 aa)) the chain is on the extracellular side. 5 Cadherin domains span residues 35-133 (VAEE…SPTF), 138-242 (ILIK…APEF), 247-347 (YEVQ…PPEV), 352-451 (ITKR…APTF), and 456-561 (YTLF…SPFV). The cysteines at positions 96 and 102 are disulfide-linked. An N-linked (GlcNAc...) asparagine glycan is attached at asparagine 169. Asparagine 359, asparagine 418, asparagine 436, asparagine 487, and asparagine 567 each carry an N-linked (GlcNAc...) asparagine glycan. The region spanning 568-671 (GSAPCTELVP…LVDGFSQPYL (104 aa)) is the Cadherin 6 domain. The helical transmembrane segment at 687-711 (TVYLVVALASVSSLFLFSVLLFVAV) threads the bilayer. The Cytoplasmic segment spans residues 712–798 (RLCRRSRAAS…FRNSFGLNIQ (87 aa)).

Its subcellular location is the cell membrane. Potential calcium-dependent cell-adhesion protein. May be involved in the establishment and maintenance of specific neuronal connections in the brain. This is Protocadherin beta-14 (PCDHB14) from Homo sapiens (Human).